The sequence spans 295 residues: Peptide transport system permease protein SapC (295 aa).

A run of 6 helical transmembrane segments spans residues 27 to 47 (IALF…FASY), 102 to 122 (LLVV…AGLL), 129 to 149 (FVGH…AVVI), 157 to 177 (LWNA…HTIY), 219 to 239 (VARA…ISLG), and 262 to 282 (PWTV…SIIF). Residues 98-278 (LGSALLVVFS…GFAIIFTILL (181 aa)) form the ABC transmembrane type-1 domain.

The protein belongs to the binding-protein-dependent transport system permease family. OppBC subfamily.

The protein localises to the cell inner membrane. In terms of biological role, involved in a peptide intake transport system that plays a role in the resistance to antimicrobial peptides. The protein is Peptide transport system permease protein SapC (sapC) of Haemophilus influenzae (strain ATCC 51907 / DSM 11121 / KW20 / Rd).